The chain runs to 233 residues: 2,3,4,5-tetrahydropyridine-2,6-dicarboxylate N-acetyltransferase (233 aa).

This sequence belongs to the transferase hexapeptide repeat family. DapH subfamily.

It carries out the reaction (S)-2,3,4,5-tetrahydrodipicolinate + acetyl-CoA + H2O = L-2-acetamido-6-oxoheptanedioate + CoA. It participates in amino-acid biosynthesis; L-lysine biosynthesis via DAP pathway; LL-2,6-diaminopimelate from (S)-tetrahydrodipicolinate (acetylase route): step 1/3. In terms of biological role, catalyzes the transfer of an acetyl group from acetyl-CoA to tetrahydrodipicolinate. The chain is 2,3,4,5-tetrahydropyridine-2,6-dicarboxylate N-acetyltransferase from Thermotoga sp. (strain RQ2).